We begin with the raw amino-acid sequence, 804 residues long: Probable phosphoketolase (804 aa).

The protein belongs to the XFP family. Thiamine diphosphate serves as cofactor.

The polypeptide is Probable phosphoketolase (Mycobacterium avium (strain 104)).